A 213-amino-acid chain; its full sequence is Orotate phosphoribosyltransferase (213 aa).

5-phospho-alpha-D-ribose 1-diphosphate is bound at residue Lys-26. 34 to 35 contributes to the orotate binding site; that stretch reads FF. Residues 72-73, Arg-99, Lys-100, Lys-103, His-105, and 124-132 contribute to the 5-phospho-alpha-D-ribose 1-diphosphate site; these read YK and DDVITAGTA. 2 residues coordinate orotate: Thr-128 and Arg-156.

Belongs to the purine/pyrimidine phosphoribosyltransferase family. PyrE subfamily. In terms of assembly, homodimer. The cofactor is Mg(2+).

It carries out the reaction orotidine 5'-phosphate + diphosphate = orotate + 5-phospho-alpha-D-ribose 1-diphosphate. The protein operates within pyrimidine metabolism; UMP biosynthesis via de novo pathway; UMP from orotate: step 1/2. Catalyzes the transfer of a ribosyl phosphate group from 5-phosphoribose 1-diphosphate to orotate, leading to the formation of orotidine monophosphate (OMP). This chain is Orotate phosphoribosyltransferase, found in Saccharophagus degradans (strain 2-40 / ATCC 43961 / DSM 17024).